The following is a 344-amino-acid chain: L-rhamnose-proton symporter (344 aa).

Transmembrane regions (helical) follow at residues 4–24 (AITM…CFYA), 38–58 (WSVG…ALLL), 74–94 (LPVF…GLTM), 101–121 (MGIG…TPII), 137–157 (TLLG…AGQL), 175–195 (LVLA…MNAA), 214–234 (LPSY…FCFI), 259–279 (VLLS…YAWG), 290–310 (ISWM…GLVL), and 323–343 (VLSL…IGMA).

It belongs to the L-rhamnose transporter (TC 2.A.7.6) family.

It localises to the cell inner membrane. It catalyses the reaction L-rhamnopyranose(in) + H(+)(in) = L-rhamnopyranose(out) + H(+)(out). Uptake of L-rhamnose across the cytoplasmic membrane with the concomitant transport of protons into the cell (symport system). The chain is L-rhamnose-proton symporter from Escherichia coli (strain K12 / MC4100 / BW2952).